Consider the following 484-residue polypeptide: UDP-N-acetylmuramoyl-L-alanyl-D-glutamate--2,6-diaminopimelate ligase (484 aa).

Serine 29 is a UDP-N-acetyl-alpha-D-muramoyl-L-alanyl-D-glutamate binding site. Residue glycine 108 to serine 114 participates in ATP binding. UDP-N-acetyl-alpha-D-muramoyl-L-alanyl-D-glutamate-binding positions include threonine 150–threonine 151, serine 177, glutamine 183, and arginine 185. Lysine 217 bears the N6-carboxylysine mark. Residues arginine 381, aspartate 405 to arginine 408, glycine 453, and glutamate 457 each bind meso-2,6-diaminopimelate. Residues aspartate 405 to arginine 408 carry the Meso-diaminopimelate recognition motif motif.

This sequence belongs to the MurCDEF family. MurE subfamily. Mg(2+) serves as cofactor. In terms of processing, carboxylation is probably crucial for Mg(2+) binding and, consequently, for the gamma-phosphate positioning of ATP.

The protein resides in the cytoplasm. The enzyme catalyses UDP-N-acetyl-alpha-D-muramoyl-L-alanyl-D-glutamate + meso-2,6-diaminopimelate + ATP = UDP-N-acetyl-alpha-D-muramoyl-L-alanyl-gamma-D-glutamyl-meso-2,6-diaminopimelate + ADP + phosphate + H(+). It participates in cell wall biogenesis; peptidoglycan biosynthesis. In terms of biological role, catalyzes the addition of meso-diaminopimelic acid to the nucleotide precursor UDP-N-acetylmuramoyl-L-alanyl-D-glutamate (UMAG) in the biosynthesis of bacterial cell-wall peptidoglycan. The chain is UDP-N-acetylmuramoyl-L-alanyl-D-glutamate--2,6-diaminopimelate ligase from Mesorhizobium japonicum (strain LMG 29417 / CECT 9101 / MAFF 303099) (Mesorhizobium loti (strain MAFF 303099)).